Reading from the N-terminus, the 156-residue chain is Deoxyuridine 5'-triphosphate nucleotidohydrolase (156 aa).

Substrate contacts are provided by residues 76-78, asparagine 89, 93-95, and lysine 103; these read RSG and TVD.

Belongs to the dUTPase family. Mg(2+) serves as cofactor.

It catalyses the reaction dUTP + H2O = dUMP + diphosphate + H(+). Its pathway is pyrimidine metabolism; dUMP biosynthesis; dUMP from dCTP (dUTP route): step 2/2. Functionally, this enzyme is involved in nucleotide metabolism: it produces dUMP, the immediate precursor of thymidine nucleotides and it decreases the intracellular concentration of dUTP so that uracil cannot be incorporated into DNA. The chain is Deoxyuridine 5'-triphosphate nucleotidohydrolase from Rhizobium rhizogenes (strain K84 / ATCC BAA-868) (Agrobacterium radiobacter).